A 597-amino-acid chain; its full sequence is Adenine deaminase (597 aa).

The protein belongs to the metallo-dependent hydrolases superfamily. Adenine deaminase family. Mn(2+) serves as cofactor.

It catalyses the reaction adenine + H2O + H(+) = hypoxanthine + NH4(+). The chain is Adenine deaminase from Paracoccus denitrificans (strain Pd 1222).